Reading from the N-terminus, the 122-residue chain is Urocortin (122 aa).

The first 25 residues, 1–25 (MIQRGRATLLVALLLLAQLRPESSQ), serve as a signal peptide directing secretion. The propeptide occupies 26-80 (WSPAAAAATGVQDPNLRWSPGVRNQGGGVRALLLLLAERFPRRAGSEPAGERQRR). Val120 carries the valine amide modification.

It belongs to the sauvagine/corticotropin-releasing factor/urotensin I family. Interacts with CRHR1 and CRHR2 (via their N-terminal extracellular domain). In the organ of Corti, detected in the inner hair cell region (at protein level). Expressed in skin (at protein level).

The protein resides in the secreted. In terms of biological role, acts in vitro to stimulate the secretion of adrenocorticotropic hormone (ACTH). Binds with high affinity to CRF receptor types 1, 2-alpha, and 2-beta. Plays a role in the establishment of normal hearing thresholds. Reduces food intake and regulates ghrelin levels in gastric body and plasma. The polypeptide is Urocortin (Ucn) (Mus musculus (Mouse)).